A 325-amino-acid chain; its full sequence is 4-hydroxy-3-methylbut-2-enyl diphosphate reductase (325 aa).

[4Fe-4S] cluster is bound at residue cysteine 13. The (2E)-4-hydroxy-3-methylbut-2-enyl diphosphate site is built by histidine 42 and histidine 76. Residues histidine 42 and histidine 76 each contribute to the dimethylallyl diphosphate site. Isopentenyl diphosphate contacts are provided by histidine 42 and histidine 76. Cysteine 98 is a binding site for [4Fe-4S] cluster. (2E)-4-hydroxy-3-methylbut-2-enyl diphosphate is bound at residue histidine 126. Residue histidine 126 coordinates dimethylallyl diphosphate. Isopentenyl diphosphate is bound at residue histidine 126. Glutamate 128 (proton donor) is an active-site residue. Position 169 (threonine 169) interacts with (2E)-4-hydroxy-3-methylbut-2-enyl diphosphate. Position 230 (cysteine 230) interacts with [4Fe-4S] cluster. 4 residues coordinate (2E)-4-hydroxy-3-methylbut-2-enyl diphosphate: serine 258, serine 259, asparagine 260, and serine 306. Residues serine 258, serine 259, asparagine 260, and serine 306 each contribute to the dimethylallyl diphosphate site. Isopentenyl diphosphate contacts are provided by serine 258, serine 259, asparagine 260, and serine 306.

The protein belongs to the IspH family. It depends on [4Fe-4S] cluster as a cofactor.

It carries out the reaction isopentenyl diphosphate + 2 oxidized [2Fe-2S]-[ferredoxin] + H2O = (2E)-4-hydroxy-3-methylbut-2-enyl diphosphate + 2 reduced [2Fe-2S]-[ferredoxin] + 2 H(+). It catalyses the reaction dimethylallyl diphosphate + 2 oxidized [2Fe-2S]-[ferredoxin] + H2O = (2E)-4-hydroxy-3-methylbut-2-enyl diphosphate + 2 reduced [2Fe-2S]-[ferredoxin] + 2 H(+). It functions in the pathway isoprenoid biosynthesis; dimethylallyl diphosphate biosynthesis; dimethylallyl diphosphate from (2E)-4-hydroxy-3-methylbutenyl diphosphate: step 1/1. The protein operates within isoprenoid biosynthesis; isopentenyl diphosphate biosynthesis via DXP pathway; isopentenyl diphosphate from 1-deoxy-D-xylulose 5-phosphate: step 6/6. In terms of biological role, catalyzes the conversion of 1-hydroxy-2-methyl-2-(E)-butenyl 4-diphosphate (HMBPP) into a mixture of isopentenyl diphosphate (IPP) and dimethylallyl diphosphate (DMAPP). Acts in the terminal step of the DOXP/MEP pathway for isoprenoid precursor biosynthesis. The polypeptide is 4-hydroxy-3-methylbut-2-enyl diphosphate reductase (Chlorobium phaeobacteroides (strain BS1)).